A 235-amino-acid chain; its full sequence is Purine nucleoside phosphorylase DeoD-type (235 aa).

Histidine 4 is a binding site for a purine D-ribonucleoside. Phosphate is bound by residues glycine 20, arginine 24, arginine 43, and 87–90 (RVGT). A purine D-ribonucleoside-binding positions include 179-181 (EME) and 203-204 (SD). Residue aspartate 204 is the Proton donor of the active site.

The protein belongs to the PNP/UDP phosphorylase family. Homohexamer; trimer of homodimers.

It carries out the reaction a purine D-ribonucleoside + phosphate = a purine nucleobase + alpha-D-ribose 1-phosphate. The catalysed reaction is a purine 2'-deoxy-D-ribonucleoside + phosphate = a purine nucleobase + 2-deoxy-alpha-D-ribose 1-phosphate. Functionally, catalyzes the reversible phosphorolytic breakdown of the N-glycosidic bond in the beta-(deoxy)ribonucleoside molecules, with the formation of the corresponding free purine bases and pentose-1-phosphate. In Clostridium perfringens (strain SM101 / Type A), this protein is Purine nucleoside phosphorylase DeoD-type.